The chain runs to 80 residues: Omega-conotoxin-like 2/7 (80 aa).

The N-terminal stretch at 1–22 (MKLTCMMIVAVMFLTASIFITA) is a signal peptide. The propeptide occupies 23 to 51 (DNSRNGIENLPRMRRHEMKKPKASKLNKR). Disulfide bonds link cysteine 53–cysteine 71, cysteine 60–cysteine 75, and cysteine 70–cysteine 79.

This sequence belongs to the conotoxin O1 superfamily. As to expression, expressed by the venom duct.

The protein resides in the secreted. Its function is as follows. Omega-conotoxins act at presynaptic membranes, they bind and block voltage-gated calcium channels (Cav). This is Omega-conotoxin-like 2/7 from Conus imperialis (Imperial cone).